Consider the following 168-residue polypeptide: Acetone carboxylase gamma subunit (168 aa).

Heterohexamer of two alpha, two beta and two gamma subunits. Fe cation is required as a cofactor. Mg(2+) serves as cofactor. Requires Zn(2+) as cofactor.

It carries out the reaction acetone + hydrogencarbonate + 2 ATP + 3 H2O = acetoacetate + 2 AMP + 4 phosphate + 4 H(+). Functionally, catalyzes the carboxylation of acetone to form acetoacetate. Has a reduced activity on butanone, and no activity on 2-pentatone, 3-pentatone, 2-hexanone, chloroacetone, pyruvate, phosphoenolpyruvate, acetaldehyde, propionaldehyde and propylene oxide. In Xanthobacter autotrophicus (strain ATCC BAA-1158 / Py2), this protein is Acetone carboxylase gamma subunit.